Consider the following 1300-residue polypeptide: Sal-like protein 3 (1300 aa).

Basic residues predominate over residues 1-11; it reads MSRRKQAKPQH. Disordered stretches follow at residues 1–51, 84–162, 234–258, and 277–352; these read MSRR…EETS, EDAP…YGAP, QRPP…PSQL, and GSGP…GSLL. The C2H2-type 1; atypical zinc finger occupies 51-73; that stretch reads SVCEKCCAEFFKWADFLEHQRSC. The span at 87–100 shows a compositional bias: pro residues; that stretch reads PAPPPEDFPEPSPA. A Phosphoserine modification is found at S109. Basic and acidic residues predominate over residues 122–132; the sequence is GEARPVEKEAE. The segment covering 145 to 157 has biased composition (pro residues); it reads PRPPPAAPAPPTP. 2 stretches are compositionally biased toward low complexity: residues 277–319 and 329–352; these read GSGP…AAPA and PQSA…GSLL. 2 C2H2-type zinc fingers span residues 420–442 and 448–470; these read HKCR…LRSH and FKCN…FQRH. The tract at residues 523–633 is disordered; sequence PTSVGLQLPP…VDGAPTSLGS (111 aa). Over residues 543 to 561 the composition is skewed to low complexity; that stretch reads SPSATPASRSPQRPSPASS. Residues 577-586 show a composition bias toward polar residues; the sequence is VSATAESPQS. C2H2-type zinc fingers lie at residues 679-701, 707-729, and 739-761; these read NQCV…YRTH, FKCK…FGVH, and HSCP…IRMH. The disordered stretch occupies residues 864 to 955; that stretch reads SVENGSGESD…GSGGAPGRAG (92 aa). The span at 889 to 910 shows a compositional bias: low complexity; that stretch reads RSAGSPALSESSSSQALSPAPS. S919 carries the post-translational modification Phosphoserine. 4 C2H2-type zinc fingers span residues 977-999, 1005-1027, 1113-1135, and 1141-1163; these read TVCG…YRSH, FVCA…LLTH, HNCQ…ERTH, and FGCT…MGTH. S1177 bears the Phosphoserine mark. Positions 1259–1279 are disordered; that stretch reads GMDKARTGSSPPIVSLDKASS.

The protein belongs to the sal C2H2-type zinc-finger protein family. In terms of tissue distribution, widely expressed in adult with highest levels in heart. Expressed in fetal brain (in neurons of hippocampus, cortex, mediodorsal and ventrolateral thalamic nuclei, putamen, cerebellum and brainstem).

The protein localises to the nucleus. In terms of biological role, probable transcription factor. The chain is Sal-like protein 3 (SALL3) from Homo sapiens (Human).